Consider the following 731-residue polypeptide: RNA-binding protein RMD9-like, mitochondrial (731 aa).

Residues 1 to 10 show a composition bias toward polar residues; the sequence is MIRLAQQTQV. 3 disordered regions span residues 1-29, 77-133, and 590-630; these read MIRL…NSLT, GGNI…GNSI, and QNDR…FNNP. Over residues 83–100 the composition is skewed to low complexity; the sequence is NNNNHLAQNNSNNSNNHH. Residues 101-122 are compositionally biased toward basic residues; sequence NNNRNHHHNNNRNHHQNNHNHS. Position 132 is a phosphoserine (S132). Over residues 598-617 the composition is skewed to polar residues; the sequence is SNMNSTQISRTATPSPSLTP.

The protein belongs to the RMD9 family. In terms of assembly, monomer. Phosphorylated. Phosphorylation promotes binding to RNA.

It is found in the mitochondrion inner membrane. Its function is as follows. May be involved in the processing or stability of mitochondrial mRNAs. The protein is RNA-binding protein RMD9-like, mitochondrial of Saccharomyces cerevisiae (strain ATCC 204508 / S288c) (Baker's yeast).